The primary structure comprises 173 residues: Ribosome maturation factor RimM (173 aa).

Residues 96 to 169 enclose the PRC barrel domain; sequence PDEFYDHQLE…LITIDPPDGL (74 aa).

This sequence belongs to the RimM family. Binds ribosomal protein uS19.

The protein resides in the cytoplasm. An accessory protein needed during the final step in the assembly of 30S ribosomal subunit, possibly for assembly of the head region. Essential for efficient processing of 16S rRNA. May be needed both before and after RbfA during the maturation of 16S rRNA. It has affinity for free ribosomal 30S subunits but not for 70S ribosomes. In Mycolicibacterium gilvum (strain PYR-GCK) (Mycobacterium gilvum (strain PYR-GCK)), this protein is Ribosome maturation factor RimM.